Consider the following 185-residue polypeptide: Ribosome-recycling factor (185 aa).

It belongs to the RRF family.

The protein localises to the cytoplasm. Its function is as follows. Responsible for the release of ribosomes from messenger RNA at the termination of protein biosynthesis. May increase the efficiency of translation by recycling ribosomes from one round of translation to another. The sequence is that of Ribosome-recycling factor from Hahella chejuensis (strain KCTC 2396).